Reading from the N-terminus, the 191-residue chain is Thymidylate kinase (191 aa).

7 to 14 provides a ligand contact to ATP; that stretch reads GIDTAGKS.

This sequence belongs to the thymidylate kinase family.

It catalyses the reaction dTMP + ATP = dTDP + ADP. In terms of biological role, phosphorylation of dTMP to form dTDP in both de novo and salvage pathways of dTTP synthesis. This is Thymidylate kinase from Sulfurimonas denitrificans (strain ATCC 33889 / DSM 1251) (Thiomicrospira denitrificans (strain ATCC 33889 / DSM 1251)).